The following is a 296-amino-acid chain: 110 kDa antigen (296 aa).

The 1; approximate repeat unit spans residues 132–143; that stretch reads EETQKTVEPEQI. The tract at residues 132–296 is 13.5 X 12 AA approximate tandem repeats of E-E-T-Q-K-T-V-E-P-E-Q-T; that stretch reads EETQKTVEPE…TQETQNTVEP (165 aa). The disordered stretch occupies residues 133 to 296; that stretch reads ETQKTVEPEQ…TQETQNTVEP (164 aa). Residues 144-155 form a 2; approximate repeat; sequence EETQNTVEPEQT. Residues 156–167 form repeat 3; it reads EETQKTVEPEQT. A 4; approximate repeat occupies 168-179; it reads EETQNTVEPEQI. Residues 180-191 form repeat 5; the sequence is EETQKTVEPEQT. The segment covering 181–271 has biased composition (basic and acidic residues); the sequence is ETQKTVEPEQ…QTEETQKTVE (91 aa). A 6; approximate repeat occupies 192–203; the sequence is EEAQKTVEPEQT. 6 repeat units span residues 204–215, 216–227, 228–239, 240–251, 252–263, and 264–275. The 13; approximate repeat unit spans residues 276–287; sequence EETQNTVEPEPT. Polar residues predominate over residues 277–296; sequence ETQNTVEPEPTQETQNTVEP. One copy of the 14; truncated repeat lies at 288-293; the sequence is QETQNT.

This Plasmodium knowlesi protein is 110 kDa antigen.